We begin with the raw amino-acid sequence, 106 residues long: Small ribosomal subunit protein uS10 (106 aa).

This sequence belongs to the universal ribosomal protein uS10 family. In terms of assembly, part of the 30S ribosomal subunit.

Its function is as follows. Involved in the binding of tRNA to the ribosomes. The chain is Small ribosomal subunit protein uS10 from Pyrobaculum neutrophilum (strain DSM 2338 / JCM 9278 / NBRC 100436 / V24Sta) (Thermoproteus neutrophilus).